Consider the following 156-residue polypeptide: MPRRRIIGTRKILPDPKFSSELLAKFINILMIDGKKSIAEVIVYTALKNLSKRTDKKELEAFEIALENVRPTVEVKSRRVGGSTYQVPVEVRPVRRNALAMRWIVESARKRVDKSMSLRLSNELYDALENKGTAVKKREEVHRMAEANKAFAHYRW.

Belongs to the universal ribosomal protein uS7 family. In terms of assembly, part of the 30S ribosomal subunit. Contacts proteins S9 and S11.

Functionally, one of the primary rRNA binding proteins, it binds directly to 16S rRNA where it nucleates assembly of the head domain of the 30S subunit. Is located at the subunit interface close to the decoding center, probably blocks exit of the E-site tRNA. The polypeptide is Small ribosomal subunit protein uS7 (Buchnera aphidicola subsp. Acyrthosiphon pisum (strain Tuc7)).